A 1178-amino-acid polypeptide reads, in one-letter code: Pyruvate carboxylase, mitochondrial (1178 aa).

The transit peptide at 1-20 (MLKFQTVRGGLRLLGVRRSS) directs the protein to the mitochondrion. The residue at position 21 (S21) is a Phosphoserine. 2 positions are modified to N6-acetyllysine: K35 and K39. One can recognise a Biotin carboxylation domain in the interval 36 to 486 (PIKKVMVANR…DTQFIDENPE (451 aa)). N6-acetyllysine; alternate is present on K79. Position 79 is an N6-succinyllysine; alternate (K79). N6-acetyllysine occurs at positions 148 and 152. 2 residues coordinate ATP: K152 and E236. An ATP-grasp domain is found at 156-353 (RAIAIAAGVP…LVHAQIHVSE (198 aa)). N6-acetyllysine is present on K241. ATP is bound at residue H271. 3 positions are modified to N6-acetyllysine: K297, K316, and K319. R328 is a catalytic residue. K434 carries the N6-acetyllysine modification. The residue at position 442 (K442) is an N6-succinyllysine. Residues 563 to 832 (LLLMDTTFRD…DTEVPLERVF (270 aa)) enclose the Pyruvate carboxyltransferase domain. 571-575 (RDAHQ) lines the substrate pocket. D572 serves as a coordination point for Mn(2+). Residue K589 is modified to N6-acetyllysine. Position 644 (R644) interacts with substrate. N6-acetyllysine occurs at positions 661 and 717. K741 contacts Mn(2+). K741 is subject to N6-carboxylysine. K748 is subject to N6-acetyllysine. Mn(2+) is bound by residues H771 and H773. N6-acetyllysine is present on K892. Residue T908 coordinates substrate. K969 carries the N6-acetyllysine modification. The residue at position 988 (K988) is an N6-acetyllysine; alternate. At K988 the chain carries N6-succinyllysine; alternate. K992 is modified (N6-acetyllysine). Phosphothreonine is present on T1003. N6-acetyllysine occurs at positions 1061, 1090, and 1124. The Biotinyl-binding domain maps to 1109 to 1178 (KGQIGAPMPG…EGDDLILEIE (70 aa)). K1144 is subject to N6-biotinyllysine.

In terms of assembly, homotetramer. Interacts (via the biotin carboxylation domain) with SIRT4. Requires biotin as cofactor. It depends on Mn(2+) as a cofactor. Post-translationally, acetylation of Lys-316 is observed in liver mitochondria from fasted mice but not from fed mice. Acetylation of Lys-748 might play a role in catalytic activity regulation. In terms of tissue distribution, liver, kidney, adipose tissue, liver and brain.

It is found in the mitochondrion matrix. The enzyme catalyses hydrogencarbonate + pyruvate + ATP = oxaloacetate + ADP + phosphate + H(+). The protein operates within carbohydrate biosynthesis; gluconeogenesis. Functionally, pyruvate carboxylase catalyzes a 2-step reaction, involving the ATP-dependent carboxylation of the covalently attached biotin in the first step and the transfer of the carboxyl group to pyruvate in the second. Catalyzes in a tissue specific manner, the initial reactions of glucose (liver, kidney) and lipid (adipose tissue, liver, brain) synthesis from pyruvate. The chain is Pyruvate carboxylase, mitochondrial (Pc) from Mus musculus (Mouse).